The primary structure comprises 68 residues: DNA-directed RNA polymerase subunit omega (68 aa).

This sequence belongs to the RNA polymerase subunit omega family. In terms of assembly, the RNAP catalytic core consists of 2 alpha, 1 beta, 1 beta' and 1 omega subunit. When a sigma factor is associated with the core the holoenzyme is formed, which can initiate transcription.

The catalysed reaction is RNA(n) + a ribonucleoside 5'-triphosphate = RNA(n+1) + diphosphate. In terms of biological role, promotes RNA polymerase assembly. Latches the N- and C-terminal regions of the beta' subunit thereby facilitating its interaction with the beta and alpha subunits. The protein is DNA-directed RNA polymerase subunit omega of Citrifermentans bemidjiense (strain ATCC BAA-1014 / DSM 16622 / JCM 12645 / Bem) (Geobacter bemidjiensis).